We begin with the raw amino-acid sequence, 255 residues long: Hydroxyacylglutathione hydrolase (255 aa).

His-56, His-58, Asp-60, His-61, His-114, Asp-133, and His-171 together coordinate Zn(2+).

This sequence belongs to the metallo-beta-lactamase superfamily. Glyoxalase II family. In terms of assembly, monomer. The cofactor is Zn(2+).

The enzyme catalyses an S-(2-hydroxyacyl)glutathione + H2O = a 2-hydroxy carboxylate + glutathione + H(+). Its pathway is secondary metabolite metabolism; methylglyoxal degradation; (R)-lactate from methylglyoxal: step 2/2. Functionally, thiolesterase that catalyzes the hydrolysis of S-D-lactoyl-glutathione to form glutathione and D-lactic acid. The polypeptide is Hydroxyacylglutathione hydrolase (Nitrobacter hamburgensis (strain DSM 10229 / NCIMB 13809 / X14)).